Here is a 124-residue protein sequence, read N- to C-terminus: UPF0231 protein Shewmr7_3366 (124 aa).

It belongs to the UPF0231 family.

This Shewanella sp. (strain MR-7) protein is UPF0231 protein Shewmr7_3366.